A 386-amino-acid polypeptide reads, in one-letter code: DNA replication and repair protein RecF (386 aa).

30–37 (GANAQGKT) is a binding site for ATP.

This sequence belongs to the RecF family.

Its subcellular location is the cytoplasm. Functionally, the RecF protein is involved in DNA metabolism; it is required for DNA replication and normal SOS inducibility. RecF binds preferentially to single-stranded, linear DNA. It also seems to bind ATP. The polypeptide is DNA replication and repair protein RecF (Natranaerobius thermophilus (strain ATCC BAA-1301 / DSM 18059 / JW/NM-WN-LF)).